The following is a 76-amino-acid chain: uORF2 protein (76 aa).

Its function is as follows. Plays a role in viral replication. This chain is uORF2 protein, found in Homo sapiens (Human).